The chain runs to 233 residues: MNHLNKLMERLGHQFNNLELLKIALTHRSSGADNNERLEFLGDSVLGFIIASELYQRRPQAREGDLSRMRASMVNGDELAQMSIKLGINEYLQLGVGEQKSGGKRRRSILADALEAIVGAIYIDAGLETCRRCVLNWYGERVDDLSKLSPKKDAKSLLQEWLQARRLPLPTYEVKITGEAHAQTFTVNCYVKGLPHKTEGVNTTRRRAEQIAAKRFLELLDDGKGDGITERDQ.

One can recognise an RNase III domain in the interval 4–126 (LNKLMERLGH…IVGAIYIDAG (123 aa)). E39 serves as a coordination point for Mg(2+). D43 is an active-site residue. Mg(2+) is bound by residues D112 and E115. Residue E115 is part of the active site. The DRBM domain maps to 153-222 (DAKSLLQEWL…AKRFLELLDD (70 aa)).

It belongs to the ribonuclease III family. In terms of assembly, homodimer. Mg(2+) serves as cofactor.

The protein localises to the cytoplasm. It carries out the reaction Endonucleolytic cleavage to 5'-phosphomonoester.. Functionally, digests double-stranded RNA. Involved in the processing of primary rRNA transcript to yield the immediate precursors to the large and small rRNAs (23S and 16S). Processes some mRNAs, and tRNAs when they are encoded in the rRNA operon. Processes pre-crRNA and tracrRNA of type II CRISPR loci if present in the organism. This Coxiella burnetii (strain CbuK_Q154) (Coxiella burnetii (strain Q154)) protein is Ribonuclease 3.